Here is a 364-residue protein sequence, read N- to C-terminus: Formate dehydrogenase (364 aa).

Positions 93 and 119 each coordinate substrate. NAD(+)-binding positions include 174 to 175 (RI), aspartate 195, 230 to 234 (PLHAG), threonine 256, aspartate 282, and 311 to 314 (HYSG).

It belongs to the D-isomer specific 2-hydroxyacid dehydrogenase family. FDH subfamily. As to quaternary structure, homodimer.

The protein resides in the cytoplasm. The enzyme catalyses formate + NAD(+) = CO2 + NADH. Cu(2+), Hg and p-chloromercuribenzoate are strong inhibitors of enzyme activity and Ca(2+), Mg(2+), Zn(2+), Mn(2+), Cd(2+) and Sn(2+) have no effect on activity indicating a cysteine residue in the protein is essential for enzyme activity or to maintain the proper structure of the enzyme. Nitrite and nitrate inhibit some enzyme activity, however cyanide, azide, thiocyanate and cyanate are strong inhibitors of the enzymatic reaction. The inhibition of cyanide is competitive with formate and reversible. In terms of biological role, catalyzes the NAD(+)-dependent oxidation of formate to carbon dioxide. Formate oxidation is the final step in the methanol oxidation pathway in methylotrophic microorganisms. Has a role in the detoxification of exogenous formate in non-methylotrophic organisms. The protein is Formate dehydrogenase of Candida boidinii (Yeast).